We begin with the raw amino-acid sequence, 880 residues long: Leucine-rich repeat-containing protein 66 (880 aa).

A helical transmembrane segment spans residues 4–24 (LYFRVITIVIGLYFTGIMTNA). The N-linked (GlcNAc...) asparagine glycan is linked to Asn-45. LRR repeat units follow at residues 86–107 (KIKHLDLSNNLISKITLSPFAY), 110–130 (ALEVLNLSNNAIHSLSLDLLS), 149–171 (LLKVLILQRNKLSDTPKGLWKLK), 172–193 (SLQSLDLSFNGILQIGWSDFHN), 196–217 (QLENLCLKSNKIFKIPPQAFKD), and 220–241 (KLQVIDLSNNALITILPMMIIA). Residue Asn-115 is glycosylated (N-linked (GlcNAc...) asparagine). The disordered stretch occupies residues 319-368 (SKAERPQGGRHTGISTLGKKAKAGSGLRKKQRRLPRSVRSTRDVQAAGKK). Positions 337–354 (KKAKAGSGLRKKQRRLPR) are enriched in basic residues. The chain crosses the membrane as a helical span at residues 376–396 (ALAVCLSVFITFLVAFSLGAF). 2 disordered regions span residues 463 to 504 (PHPH…NDGA) and 679 to 746 (VTPA…SKDN). The span at 483–493 (GSSQSPGQCGD) shows a compositional bias: polar residues. Over residues 697–707 (CELESDCDSDE) the composition is skewed to acidic residues. A compositionally biased stretch (low complexity) spans 709-720 (SLFTLSSISSES). Ser-723 carries the phosphoserine modification. Residues 737–746 (DESSGASKDN) show a composition bias toward polar residues. Asn-746 carries N-linked (GlcNAc...) asparagine glycosylation. Phosphoserine is present on Ser-752. Residue Asn-756 is glycosylated (N-linked (GlcNAc...) asparagine). Disordered regions lie at residues 764–816 (GKCK…PLGD) and 855–880 (TPPCSAEVPSDPDKAAFHERDSDILK). 2 stretches are compositionally biased toward basic and acidic residues: residues 788–800 (THLENASDTDRSE) and 865–880 (DPDKAAFHERDSDILK).

It localises to the membrane. This Homo sapiens (Human) protein is Leucine-rich repeat-containing protein 66 (LRRC66).